The following is a 239-amino-acid chain: Fatty acid metabolism regulator protein (239 aa).

Positions 6-74 constitute an HTH gntR-type domain; it reads QSPAGFAEEY…HGKPTKINNF (69 aa). Positions 34–53 form a DNA-binding region, H-T-H motif; sequence ERELSELIGVTRTTLREVLQ.

In terms of assembly, homodimer.

The protein resides in the cytoplasm. Multifunctional regulator of fatty acid metabolism. In Pectobacterium carotovorum subsp. carotovorum (strain PC1), this protein is Fatty acid metabolism regulator protein.